We begin with the raw amino-acid sequence, 188 residues long: dCTP deaminase (188 aa).

DCTP contacts are provided by residues 111–116 (KSTYAR), 135–137 (TLE), glutamine 156, tyrosine 170, and glutamine 180. Glutamate 137 serves as the catalytic Proton donor/acceptor.

This sequence belongs to the dCTP deaminase family. In terms of assembly, homotrimer.

It carries out the reaction dCTP + H2O + H(+) = dUTP + NH4(+). Its pathway is pyrimidine metabolism; dUMP biosynthesis; dUMP from dCTP (dUTP route): step 1/2. Functionally, catalyzes the deamination of dCTP to dUTP. The protein is dCTP deaminase of Coxiella burnetii (strain CbuK_Q154) (Coxiella burnetii (strain Q154)).